Reading from the N-terminus, the 227-residue chain is Phosphoribosylformylglycinamidine synthase subunit PurQ (227 aa).

The 223-residue stretch at 3-225 (FAVIVLPGSN…VKNWRETHVA (223 aa)) folds into the Glutamine amidotransferase type-1 domain. Residue Cys86 is the Nucleophile of the active site. Catalysis depends on residues His194 and Glu196.

As to quaternary structure, part of the FGAM synthase complex composed of 1 PurL, 1 PurQ and 2 PurS subunits.

It localises to the cytoplasm. It catalyses the reaction N(2)-formyl-N(1)-(5-phospho-beta-D-ribosyl)glycinamide + L-glutamine + ATP + H2O = 2-formamido-N(1)-(5-O-phospho-beta-D-ribosyl)acetamidine + L-glutamate + ADP + phosphate + H(+). The enzyme catalyses L-glutamine + H2O = L-glutamate + NH4(+). It participates in purine metabolism; IMP biosynthesis via de novo pathway; 5-amino-1-(5-phospho-D-ribosyl)imidazole from N(2)-formyl-N(1)-(5-phospho-D-ribosyl)glycinamide: step 1/2. Its function is as follows. Part of the phosphoribosylformylglycinamidine synthase complex involved in the purines biosynthetic pathway. Catalyzes the ATP-dependent conversion of formylglycinamide ribonucleotide (FGAR) and glutamine to yield formylglycinamidine ribonucleotide (FGAM) and glutamate. The FGAM synthase complex is composed of three subunits. PurQ produces an ammonia molecule by converting glutamine to glutamate. PurL transfers the ammonia molecule to FGAR to form FGAM in an ATP-dependent manner. PurS interacts with PurQ and PurL and is thought to assist in the transfer of the ammonia molecule from PurQ to PurL. This Bacillus licheniformis (strain ATCC 14580 / DSM 13 / JCM 2505 / CCUG 7422 / NBRC 12200 / NCIMB 9375 / NCTC 10341 / NRRL NRS-1264 / Gibson 46) protein is Phosphoribosylformylglycinamidine synthase subunit PurQ.